The sequence spans 94 residues: MKLAILSLFLVFQIGVESKKNGFALDHYGKPWECNLFNVFGPYCNNQCTENKARKGYCCTFTCYCFDLPDDAKILEIGDSRKNYCDVSLTDVLG.

The signal sequence occupies residues 1–18 (MKLAILSLFLVFQIGVES). Positions 20–86 (KNGFALDHYG…IGDSRKNYCD (67 aa)) constitute an LCN-type CS-alpha/beta domain. 4 disulfide bridges follow: Cys-34–Cys-85, Cys-44–Cys-63, Cys-48–Cys-65, and Cys-59–Cys-85.

This sequence belongs to the long (4 C-C) scorpion toxin superfamily. Sodium channel inhibitor family. Beta subfamily. As to expression, expressed by the venom gland.

The protein localises to the secreted. Functionally, binds voltage-independently at site-4 of sodium channels (Nav) and shift the voltage of activation toward more negative potentials thereby affecting sodium channel activation and promoting spontaneous and repetitive firing. This is Neurotoxin LmNaTx45.2 from Lychas mucronatus (Chinese swimming scorpion).